Here is a 525-residue protein sequence, read N- to C-terminus: GMP synthase [glutamine-hydrolyzing] (525 aa).

In terms of domain architecture, Glutamine amidotransferase type-1 spans 9–207 (RILILDFGSQ…VLDVCQCEAL (199 aa)). Residue Cys-86 is the Nucleophile of the active site. Active-site residues include His-181 and Glu-183. Positions 208–400 (WTPASIIEDT…LGLPYDMLNR (193 aa)) constitute a GMPS ATP-PPase domain. 235 to 241 (SGGVDSS) is an ATP binding site.

As to quaternary structure, homodimer.

It catalyses the reaction XMP + L-glutamine + ATP + H2O = GMP + L-glutamate + AMP + diphosphate + 2 H(+). It functions in the pathway purine metabolism; GMP biosynthesis; GMP from XMP (L-Gln route): step 1/1. In terms of biological role, catalyzes the synthesis of GMP from XMP. The polypeptide is GMP synthase [glutamine-hydrolyzing] (Photorhabdus laumondii subsp. laumondii (strain DSM 15139 / CIP 105565 / TT01) (Photorhabdus luminescens subsp. laumondii)).